Consider the following 255-residue polypeptide: Sorbose reductase sou1 (255 aa).

The NADP(+) site is built by Ile-21 and Asn-95. Catalysis depends on proton donor residues Ser-148 and Tyr-163. Residues Tyr-163, Lys-167, Ile-195, and Thr-197 each contribute to the NADP(+) site. The Lowers pKa of active site Tyr role is filled by Lys-167.

This sequence belongs to the short-chain dehydrogenases/reductases (SDR) family.

It carries out the reaction D-sorbitol + NADP(+) = keto-L-sorbose + NADPH + H(+). Functionally, catalyzes the NADP dependent reduction of L-sorbose to D-glucitol. In Schizosaccharomyces pombe (strain 972 / ATCC 24843) (Fission yeast), this protein is Sorbose reductase sou1 (sou1).